The sequence spans 316 residues: Putative HTH-type transcriptional regulatory protein PYRAB03670 (316 aa).

An HTH cro/C1-type domain is found at 131 to 189 (LKDLREKHGYSLSELANILGVSRKSLQRYEKGDSMVTLEVALRLEEVFDEALVKPINVL). Positions 142–161 (LSELANILGVSRKSLQRYEK) form a DNA-binding region, H-T-H motif.

The chain is Putative HTH-type transcriptional regulatory protein PYRAB03670 from Pyrococcus abyssi (strain GE5 / Orsay).